We begin with the raw amino-acid sequence, 287 residues long: Orotidine 5'-phosphate decarboxylase (287 aa).

Lysine 97 serves as the catalytic Proton donor.

It belongs to the OMP decarboxylase family. Type 2 subfamily.

The enzyme catalyses orotidine 5'-phosphate + H(+) = UMP + CO2. It participates in pyrimidine metabolism; UMP biosynthesis via de novo pathway; UMP from orotate: step 2/2. The sequence is that of Orotidine 5'-phosphate decarboxylase from Clostridium perfringens (strain ATCC 13124 / DSM 756 / JCM 1290 / NCIMB 6125 / NCTC 8237 / Type A).